A 307-amino-acid chain; its full sequence is MTLQSVLLGAMIILGPILSMTSSNWIIIWIGLEISLLGFVSYYMLMKKIMSGEGIMMYFLIQSVSSTVMLLNGLYIFVNHASSYIYLFIFITMLMLKIGMFPLHFWIIPVYSKLSYLNIGIVGLLLKIVPMWILMHMGCITSEMLNLITMLSVTSMLFGALIGMNLSKMRMVLGASTITHNGWLGMSCISGSLFKYFITYGFSLVILLVFLYLGDKMSISLSLLSLSGLPPFMLFIGKINVLLMMMETNLWFIVLVFAILSAVISLVYYLKFSVMFFMNMKNNYLKHYKMAMFLLVNVTFGMLLFLT.

10 consecutive transmembrane segments (helical) span residues 1 to 21 (MTLQ…LSMT), 25 to 45 (WIII…YYML), 58 to 78 (YFLI…YIFV), 88 to 108 (FIFI…FWII), 119 to 139 (IGIV…HMGC), 144 to 164 (MLNL…LIGM), 193 to 213 (LFKY…FLYL), 217 to 237 (MSIS…LFIG), 250 to 270 (LWFI…VYYL), and 287 to 307 (HYKM…LFLT).

This sequence belongs to the complex I subunit 2 family.

The protein resides in the mitochondrion inner membrane. The catalysed reaction is a ubiquinone + NADH + 5 H(+)(in) = a ubiquinol + NAD(+) + 4 H(+)(out). Functionally, core subunit of the mitochondrial membrane respiratory chain NADH dehydrogenase (Complex I) that is believed to belong to the minimal assembly required for catalysis. Complex I functions in the transfer of electrons from NADH to the respiratory chain. The immediate electron acceptor for the enzyme is believed to be ubiquinone. The polypeptide is NADH-ubiquinone oxidoreductase chain 2 (ND2) (Albinaria caerulea (Land snail)).